Reading from the N-terminus, the 294-residue chain is Phosphatidylglycerol--prolipoprotein diacylglyceryl transferase (294 aa).

7 consecutive transmembrane segments (helical) span residues 19–39, 69–89, 101–121, 139–159, 195–215, 224–244, and 267–287; these read VFGFDLALRWYALAYIVGIVL, LLTWVIVGVILGGRLGYVFFY, ILAVWQGGMAFHGGLLGVIAA, IMALGVPPGLLLGRIANFINA, QLYEAGLEGLILGALLIWLVW, GYVAGVFFAGYGVSRFFVEFF, and WGLTMGQCLSLPMILLGIWLI. Residue R152 participates in a 1,2-diacyl-sn-glycero-3-phospho-(1'-sn-glycerol) binding.

Belongs to the Lgt family.

The protein localises to the cell inner membrane. The catalysed reaction is L-cysteinyl-[prolipoprotein] + a 1,2-diacyl-sn-glycero-3-phospho-(1'-sn-glycerol) = an S-1,2-diacyl-sn-glyceryl-L-cysteinyl-[prolipoprotein] + sn-glycerol 1-phosphate + H(+). Its pathway is protein modification; lipoprotein biosynthesis (diacylglyceryl transfer). In terms of biological role, catalyzes the transfer of the diacylglyceryl group from phosphatidylglycerol to the sulfhydryl group of the N-terminal cysteine of a prolipoprotein, the first step in the formation of mature lipoproteins. This is Phosphatidylglycerol--prolipoprotein diacylglyceryl transferase from Roseobacter denitrificans (strain ATCC 33942 / OCh 114) (Erythrobacter sp. (strain OCh 114)).